We begin with the raw amino-acid sequence, 116 residues long: Large ribosomal subunit protein bL19 (116 aa).

Belongs to the bacterial ribosomal protein bL19 family.

Functionally, this protein is located at the 30S-50S ribosomal subunit interface and may play a role in the structure and function of the aminoacyl-tRNA binding site. This Pseudomonas fluorescens (strain ATCC BAA-477 / NRRL B-23932 / Pf-5) protein is Large ribosomal subunit protein bL19.